A 439-amino-acid chain; its full sequence is 23S rRNA (uracil(1939)-C(5))-methyltransferase RlmD (439 aa).

The region spanning 10 to 69 (KTQLNTRHQAVQVERLDHHGAGIAYLKKKPLFIDGALPGEEVVTQLVEEKSKFARGKLIK) is the TRAM domain. The [4Fe-4S] cluster site is built by Cys-82, Cys-88, Cys-91, and Cys-169. S-adenosyl-L-methionine is bound by residues Gln-272, Phe-301, Asn-306, Glu-322, Asn-349, and Asp-370. Residue Cys-396 is the Nucleophile of the active site.

Belongs to the class I-like SAM-binding methyltransferase superfamily. RNA M5U methyltransferase family. RlmD subfamily.

The enzyme catalyses uridine(1939) in 23S rRNA + S-adenosyl-L-methionine = 5-methyluridine(1939) in 23S rRNA + S-adenosyl-L-homocysteine + H(+). In terms of biological role, catalyzes the formation of 5-methyl-uridine at position 1939 (m5U1939) in 23S rRNA. The chain is 23S rRNA (uracil(1939)-C(5))-methyltransferase RlmD from Vibrio parahaemolyticus serotype O3:K6 (strain RIMD 2210633).